The primary structure comprises 183 residues: PLAT domain-containing protein 2 (183 aa).

The N-terminal stretch at 1–25 (MMPRRDVLFLSLLLVIATVSAVALA) is a signal peptide. Residues 31–158 (CVYTFFLRTG…SPYELSAVRN (128 aa)) enclose the PLAT domain.

It localises to the endoplasmic reticulum. Functionally, involved in response to abiotic stress. The protein is PLAT domain-containing protein 2 of Arabidopsis thaliana (Mouse-ear cress).